Reading from the N-terminus, the 276-residue chain is Shikimate dehydrogenase (NADP(+)) (276 aa).

Shikimate is bound by residues 15-17 (SLS) and T62. K66 serves as the catalytic Proton acceptor. E78 is a binding site for NADP(+). Positions 87 and 102 each coordinate shikimate. Residues 151–156 (NRTVEK) and I218 each bind NADP(+). Y220 is a binding site for shikimate. G241 lines the NADP(+) pocket.

Belongs to the shikimate dehydrogenase family. As to quaternary structure, homodimer.

It carries out the reaction shikimate + NADP(+) = 3-dehydroshikimate + NADPH + H(+). It participates in metabolic intermediate biosynthesis; chorismate biosynthesis; chorismate from D-erythrose 4-phosphate and phosphoenolpyruvate: step 4/7. Involved in the biosynthesis of the chorismate, which leads to the biosynthesis of aromatic amino acids. Catalyzes the reversible NADPH linked reduction of 3-dehydroshikimate (DHSA) to yield shikimate (SA). This is Shikimate dehydrogenase (NADP(+)) from Geobacillus kaustophilus (strain HTA426).